We begin with the raw amino-acid sequence, 133 residues long: Nickel-responsive regulator (133 aa).

Positions 76, 87, 89, and 95 each coordinate Ni(2+).

This sequence belongs to the transcriptional regulatory CopG/NikR family. Homotetramer. Requires Ni(2+) as cofactor.

Its function is as follows. Transcriptional repressor of the nikABCDE operon. Is active in the presence of excessive concentrations of intracellular nickel. The protein is Nickel-responsive regulator of Salmonella arizonae (strain ATCC BAA-731 / CDC346-86 / RSK2980).